Here is a 1784-residue protein sequence, read N- to C-terminus: Protein mel-28 (1784 aa).

Residues 1–956 are required for nuclear envelope and kinetochore localization; the sequence is MDNENSSIFK…QNDDEDMPEV (956 aa). A required for association with mitotic chromosomes region spans residues 566–778; sequence GKIEEFCQLA…TSPEDSEHSE (213 aa). An important for nuclear localization region spans residues 846–1071; sequence APMTVTIGKH…HNSILKTAKG (226 aa). Disordered stretches follow at residues 945–994 and 1115–1784; these read KVQN…AKRI and ETMT…RAKQ. Residues 1126–1149 are compositionally biased toward basic and acidic residues; the sequence is GKHDEEKDSEKNVVDEMEEVKDQE. 2 stretches are compositionally biased toward acidic residues: residues 1222-1232 and 1266-1278; these read LEEEGEDEDIW and VNEE…EEVQ. A chromatin binding region spans residues 1239–1601; it reads FEVQMDEDCE…TTVDPSSSAL (363 aa). The span at 1279–1293 shows a compositional bias: basic and acidic residues; sequence QDAKEPEKTEKRQEE. Positions 1297-1306 are enriched in low complexity; that stretch reads EVMQPVIPEE. Residues 1321–1336 show a composition bias toward acidic residues; sequence ELQEEPDIVPTGDEDT. Positions 1337 to 1351 are enriched in basic and acidic residues; it reads ADKVQEQAVEEDRPP. Over residues 1352 to 1366 the composition is skewed to polar residues; that stretch reads SRNTRSSSVQKSTSQ. The segment covering 1367-1382 has biased composition (basic and acidic residues); that stretch reads VEDRDPKELVEEERPP. Positions 1383 to 1398 are enriched in polar residues; the sequence is SRNTRSASVQKSSNQE. Positions 1428 to 1444 are enriched in basic and acidic residues; that stretch reads KVKDQKPEELIEEDRPP. Polar residues predominate over residues 1445-1459; the sequence is SRNTRSASAQKTVAA. Positions 1533 to 1546 are enriched in low complexity; that stretch reads AAASTSSSRAGSVT. Residues 1566–1576 show a composition bias toward acidic residues; that stretch reads VQEEEEEEAEE. Over residues 1581–1606 the composition is skewed to polar residues; it reads SRSTRSASVKNTTVDPSSSALASTKR. The segment at 1601–1784 is important for nuclear localization; that stretch reads LASTKRTTSR…LLRSARRAKQ (184 aa). The a.T hook 1 DNA-binding region spans 1630 to 1642; the sequence is TPKRGRPAKKDAG. The segment at 1630–1784 is required for chromosome segregation, nuclear growth, nucleoplasmic accumulation and cell cycle timing, but not required for nuclear envelope and kinetochore localization; it reads TPKRGRPAKK…LLRSARRAKQ (155 aa). A compositionally biased stretch (polar residues) spans 1716 to 1735; sequence AGTSKQSRSVTRSRASSIDV. A DNA-binding region (a.T hook 2) is located at residues 1746 to 1758; the sequence is KRGRGRPPKTVLE.

Ubiquitously expressed (at protein level).

Its subcellular location is the nucleus. It is found in the nucleoplasm. The protein localises to the nucleus envelope. The protein resides in the nucleus inner membrane. It localises to the nuclear pore complex. Its subcellular location is the chromosome. It is found in the centromere. The protein localises to the kinetochore. Nuclear envelope protein which has essential roles in assembly of nuclear pore complexes and in chromatin maintenance during the cell cycle. Appears to be a stable structural component of the nuclear envelope during interphase. In dividing cells, localizes to kinetochores during early stages of mitosis and then to chromatin during late mitosis. Important for several mitotic processes including chromosome condensation, kinetochore assembly, chromosome segregation and cell-cycle timing. In postmitotic cells, plays a role in the early steps of nuclear pore complex assembly by recruiting the nucleoporins npp-10 and npp-5 to chromatin. Also involved in meiotic chromosome segregation. May function downstream of the Ran GTPase signaling pathway. In Caenorhabditis elegans, this protein is Protein mel-28.